The sequence spans 191 residues: Orotate phosphoribosyltransferase (191 aa).

114-122 serves as a coordination point for 5-phospho-alpha-D-ribose 1-diphosphate; it reads EDVVTTGKS. Positions 118 and 146 each coordinate orotate.

It belongs to the purine/pyrimidine phosphoribosyltransferase family. PyrE subfamily. In terms of assembly, homodimer. It depends on Mg(2+) as a cofactor.

It catalyses the reaction orotidine 5'-phosphate + diphosphate = orotate + 5-phospho-alpha-D-ribose 1-diphosphate. Its pathway is pyrimidine metabolism; UMP biosynthesis via de novo pathway; UMP from orotate: step 1/2. Catalyzes the transfer of a ribosyl phosphate group from 5-phosphoribose 1-diphosphate to orotate, leading to the formation of orotidine monophosphate (OMP). This chain is Orotate phosphoribosyltransferase, found in Clostridium botulinum (strain Kyoto / Type A2).